The chain runs to 92 residues: Small ribosomal subunit protein uS19 (92 aa).

The protein belongs to the universal ribosomal protein uS19 family.

Protein S19 forms a complex with S13 that binds strongly to the 16S ribosomal RNA. The chain is Small ribosomal subunit protein uS19 from Corynebacterium jeikeium (strain K411).